Consider the following 103-residue polypeptide: Methane monooxygenase component D (103 aa).

The soluble methane monooxygenase (sMMO) consists of four components A/MMOH (composed of alpha/MmoX, beta/MmoY and gamma/MmoZ), B/MMOB (MmoB), C/MMOR (MmoC) and D/MMOD (MmoD).

The protein is Methane monooxygenase component D (mmoD) of Methylococcus capsulatus (strain ATCC 33009 / NCIMB 11132 / Bath).